Reading from the N-terminus, the 254-residue chain is Esterase YbfF (254 aa).

Active-site residues include serine 89 and histidine 234.

This sequence belongs to the DmpD/TodF/XylF esterase family.

Its function is as follows. Displays esterase activity toward palmitoyl-CoA, malonyl-CoA and pNP-butyrate. This chain is Esterase YbfF (ybfF), found in Escherichia coli (strain K12).